A 721-amino-acid polypeptide reads, in one-letter code: Polyribonucleotide nucleotidyltransferase (721 aa).

D495 and D501 together coordinate Mg(2+). Residues 562-621 (PRLLSFRIDPELIGTVIGPGGRTIKNITERTNTKIDIEDSGIVTIASHDGAAAEEAQKII) enclose the KH domain. An S1 motif domain is found at 631–699 (GEVFTGSITR…NRGRINLTLR (69 aa)). Positions 700-721 (GVPQSGESADSQPAPTPVAPLS) are disordered.

The protein belongs to the polyribonucleotide nucleotidyltransferase family. Mg(2+) serves as cofactor.

It localises to the cytoplasm. The enzyme catalyses RNA(n+1) + phosphate = RNA(n) + a ribonucleoside 5'-diphosphate. Its function is as follows. Involved in mRNA degradation. Catalyzes the phosphorolysis of single-stranded polyribonucleotides processively in the 3'- to 5'-direction. The chain is Polyribonucleotide nucleotidyltransferase from Synechococcus sp. (strain CC9311).